The chain runs to 340 residues: Protein arginine N-methyltransferase 6 (340 aa).

Residues 15–339 (DQEYFQCYSD…LRRTKHFHMG (325 aa)) form the SAM-dependent MTase PRMT-type domain. 5 residues coordinate S-adenosyl-L-methionine: H28, R37, G61, E83, and E112. Active-site residues include E126 and E135.

Belongs to the class I-like SAM-binding methyltransferase superfamily. Protein arginine N-methyltransferase family. PRMT6 subfamily.

The protein resides in the nucleus. It carries out the reaction L-arginyl-[protein] + 2 S-adenosyl-L-methionine = N(omega),N(omega)-dimethyl-L-arginyl-[protein] + 2 S-adenosyl-L-homocysteine + 2 H(+). Its function is as follows. Arginine methyltransferase that can catalyze the formation of both omega-N monomethylarginine (MMA) and asymmetrical dimethylarginine (aDMA), with a strong preference for the formation of aDMA. Preferentially methylates arginyl residues present in a glycine and arginine-rich domain and displays preference for monomethylated substrates. Specifically mediates the asymmetric dimethylation of histone H3 'Arg-2' to form H3R2me2a. H3R2me2a represents a specific tag for epigenetic transcriptional repression and is mutually exclusive with methylation on histone H3 'Lys-4' (H3K4me2 and H3K4me3). Acts as a transcriptional repressor of various genes such as HOXA2, THBS1 and TP53. Repression of TP53 blocks cellular senescence. Also methylates histone H2A and H4 'Arg-3' (H2AR3me and H4R3me, respectively). Acts as a regulator of DNA base excision during DNA repair by mediating the methylation of DNA polymerase beta (POLB), leading to the stimulation of its polymerase activity by enhancing DNA binding and processivity. Methylates HMGA1. Regulates alternative splicing events. Acts as a transcriptional coactivator of a number of steroid hormone receptors including ESR1, ESR2, PGR and NR3C1. This Xenopus laevis (African clawed frog) protein is Protein arginine N-methyltransferase 6 (prmt6).